A 482-amino-acid chain; its full sequence is tRNA sulfurtransferase (482 aa).

The THUMP domain occupies 61 to 165 (LAIRDALTRI…DDRLLLIKGR (105 aa)). Residues 183 to 184 (LI), K265, G287, and Q296 contribute to the ATP site. Residues C344 and C456 are joined by a disulfide bond. Residues 404 to 482 (FGANDVILDI…GFANVKVYRP (79 aa)) enclose the Rhodanese domain. C456 (cysteine persulfide intermediate) is an active-site residue.

It belongs to the ThiI family.

It localises to the cytoplasm. It carries out the reaction [ThiI sulfur-carrier protein]-S-sulfanyl-L-cysteine + a uridine in tRNA + 2 reduced [2Fe-2S]-[ferredoxin] + ATP + H(+) = [ThiI sulfur-carrier protein]-L-cysteine + a 4-thiouridine in tRNA + 2 oxidized [2Fe-2S]-[ferredoxin] + AMP + diphosphate. The enzyme catalyses [ThiS sulfur-carrier protein]-C-terminal Gly-Gly-AMP + S-sulfanyl-L-cysteinyl-[cysteine desulfurase] + AH2 = [ThiS sulfur-carrier protein]-C-terminal-Gly-aminoethanethioate + L-cysteinyl-[cysteine desulfurase] + A + AMP + 2 H(+). The protein operates within cofactor biosynthesis; thiamine diphosphate biosynthesis. In terms of biological role, catalyzes the ATP-dependent transfer of a sulfur to tRNA to produce 4-thiouridine in position 8 of tRNAs, which functions as a near-UV photosensor. Also catalyzes the transfer of sulfur to the sulfur carrier protein ThiS, forming ThiS-thiocarboxylate. This is a step in the synthesis of thiazole, in the thiamine biosynthesis pathway. The sulfur is donated as persulfide by IscS. In Salmonella arizonae (strain ATCC BAA-731 / CDC346-86 / RSK2980), this protein is tRNA sulfurtransferase.